Consider the following 549-residue polypeptide: Glucose-6-phosphate isomerase (549 aa).

The Proton donor role is filled by E353. Residues H384 and K513 contribute to the active site.

It belongs to the GPI family.

The protein resides in the cytoplasm. The enzyme catalyses alpha-D-glucose 6-phosphate = beta-D-fructose 6-phosphate. The protein operates within carbohydrate biosynthesis; gluconeogenesis. It functions in the pathway carbohydrate degradation; glycolysis; D-glyceraldehyde 3-phosphate and glycerone phosphate from D-glucose: step 2/4. Its function is as follows. Catalyzes the reversible isomerization of glucose-6-phosphate to fructose-6-phosphate. This chain is Glucose-6-phosphate isomerase, found in Brucella melitensis biotype 2 (strain ATCC 23457).